We begin with the raw amino-acid sequence, 164 residues long: Interleukin-10 (164 aa).

Positions 1–18 are cleaved as a signal peptide; the sequence is MPSSALLCCLIFLARVAA. Disulfide bonds link Cys-30/Cys-126 and Cys-80/Cys-132. Asn-134 is a glycosylation site (N-linked (GlcNAc...) asparagine).

The protein belongs to the IL-10 family. In terms of assembly, homodimer. Interacts with IL10RA and IL10RB.

It is found in the secreted. Functionally, major immune regulatory cytokine that acts on many cells of the immune system where it has profound anti-inflammatory functions, limiting excessive tissue disruption caused by inflammation. Mechanistically, IL10 binds to its heterotetrameric receptor comprising IL10RA and IL10RB leading to JAK1 and STAT2-mediated phosphorylation of STAT3. In turn, STAT3 translocates to the nucleus where it drives expression of anti-inflammatory mediators. Targets antigen-presenting cells (APCs) such as macrophages and monocytes and inhibits their release of pro-inflammatory cytokines including granulocyte-macrophage colony-stimulating factor /GM-CSF, granulocyte colony-stimulating factor/G-CSF, IL-1 alpha, IL-1 beta, IL-6, IL-8 and TNF-alpha. Also interferes with antigen presentation by reducing the expression of MHC-class II and co-stimulatory molecules, thereby inhibiting their ability to induce T cell activation. In addition, controls the inflammatory response of macrophages by reprogramming essential metabolic pathways including mTOR signaling. The chain is Interleukin-10 (IL10) from Orcinus orca (Killer whale).